The sequence spans 323 residues: Glyoxylate/hydroxypyruvate reductase B (323 aa).

The segment at 37–62 is disordered; the sequence is AEHGGAGARRRHDRLQQHGGSSAAGE. Residues Arg236 and Glu265 contribute to the active site. The active-site Proton donor is His284.

This sequence belongs to the D-isomer specific 2-hydroxyacid dehydrogenase family. GhrB subfamily. As to quaternary structure, homodimer.

It is found in the cytoplasm. It carries out the reaction glycolate + NADP(+) = glyoxylate + NADPH + H(+). The enzyme catalyses (R)-glycerate + NAD(+) = 3-hydroxypyruvate + NADH + H(+). It catalyses the reaction (R)-glycerate + NADP(+) = 3-hydroxypyruvate + NADPH + H(+). Its function is as follows. Catalyzes the NADPH-dependent reduction of glyoxylate and hydroxypyruvate into glycolate and glycerate, respectively. This is Glyoxylate/hydroxypyruvate reductase B (tkrA) from Enterobacter agglomerans (Erwinia herbicola).